The sequence spans 403 residues: Glucosyl-3-phosphoglycerate synthase (403 aa).

Asp-150 lines the a divalent metal cation pocket. 189 to 192 is a binding site for (2R)-3-phosphoglycerate; that stretch reads GRVT. An a divalent metal cation-binding site is contributed by His-273.

This sequence belongs to the glycosyltransferase 2 family. As to quaternary structure, homodimer. Requires Mn(2+) as cofactor. Co(2+) is required as a cofactor. Mg(2+) serves as cofactor. It depends on Ni(2+) as a cofactor.

The enzyme catalyses an NDP-alpha-D-glucose + (2R)-3-phosphoglycerate = (2R)-2-O-(alpha-D-glucopyranosyl)-3-phospho-glycerate + a ribonucleoside 5'-diphosphate + H(+). Functionally, involved in the biosynthesis of 6-O-methylglucose lipopolysaccarides (MGLPs). Catalyzes the transfer of a glucose (Glc) moiety from uridine diphosphate (UDP-Glc) to the position 2 of 3-phospho-D-glycerate (3-PGA) to form glucosyl-3-phosphoglycerate (GPG). GpgS is most active with UDP-glucose, followed by GDP-glucose, ADP-glucose, and to a lesser extent, TDP-glucose. 3-PGA is the only acceptor for these glucosyl donors. The sequence is that of Glucosyl-3-phosphoglycerate synthase from Persephonella marina (strain DSM 14350 / EX-H1).